Reading from the N-terminus, the 344-residue chain is MSVGNIQSPSNLPGLQNLNLNTNTNSQQSGQSVQDLIKQVEKDILNIIAALVQKAAQSAGGNTGNTGNAPAKDGNANAGANDPSKNDPSKSQGPQSANKTGNVDDANNQDPMQALMQLLEDLVKLLKAALHMQQPGGNDKGNGVGGANGAKGAGGQGGLAEALQEIEQILAQLGGGGAGAGGAGGGVGGAGGADGGSGAGGAGGANGADGGNGVNGNQANGPQNAGDVNGANGADDGSEDQGGLTGVLQKLMKILNALVQMMQQGGLGGGNQAQGGSKGAGNASPASGANPGANQPGSADDQSSGQNNLQSQIMDVVKEVVQILQQMLAAQNGGSQQSTSTQPM.

Disordered regions lie at residues 1–28, 58–108, 134–156, 211–242, and 268–311; these read MSVGNIQSPSNLPGLQNLNLNTNTNSQQ, SAGG…DANN, QPGGNDKGNGVGGANGAKGAGGQ, GNGVNGNQANGPQNAGDVNGANGADDGSEDQG, and GGGN…NLQS. 2 stretches are compositionally biased toward low complexity: residues 8–28 and 65–83; these read SPSNLPGLQNLNLNTNTNSQQ and NTGNAPAKDGNANAGANDP. Residues 89–108 are compositionally biased toward polar residues; the sequence is SKSQGPQSANKTGNVDDANN. Residues 138 to 156 are compositionally biased toward gly residues; sequence NDKGNGVGGANGAKGAGGQ. Over residues 215–235 the composition is skewed to low complexity; it reads NGNQANGPQNAGDVNGANGAD. The span at 268 to 279 shows a compositional bias: gly residues; it reads GGGNQAQGGSKG. Over residues 280-294 the composition is skewed to low complexity; the sequence is AGNASPASGANPGAN. Over residues 295-311 the composition is skewed to polar residues; the sequence is QPGSADDQSSGQNNLQS.

In terms of processing, popA2 and PopA3 are produced from PopA1.

It localises to the secreted. Its function is as follows. Acts as a specific hypersensitive response (HR) elicitor. Has activity on tobacco (non-host plant) and petunia but is without activity on tomato (host plant); PopA3 seems to be more active than a PopA1-PopA2 mixture. This Ralstonia nicotianae (strain ATCC BAA-1114 / GMI1000) (Ralstonia solanacearum) protein is Protein PopA1 (popA).